The sequence spans 376 residues: MSTNTTTTNATPELAKESVFFQSNHEDLKNRPKVRGYDFNEGVDFSKLFETYKTIGYQASAVGEAIDEINRMISWRLVDEPLKEGEDDDEERKVTRCKIFLGYTSNLVSSGVREIIRYLVQHSMVDVIVSTAGGVEEDFIKCLAPTYMGEFHLEGEKLRRKGLNRIGNLLVPNDNYCKFEDWIMPILDQMVEEQKTKGTVWTPSRVINRLGKEINHEDSIYYWAWKNDIPVYSPALTDGSIGDMMYFHSYNTPGLVLDIISDIRAINNHAVYSKKSGMIILGGGVIKHHICNANLFRNGADYSVFVNTGNEFDGSDSGARPDEAVSWGKIKLDAKPVKVYSEASIVFPILVAETFAKTFKKKSPEELKLNKRSIFD.

Residues S105–S109, T131–G133, E137, and D238 each bind NAD(+). E136–E137 contacts spermidine. Residue D243 coordinates spermidine. G283 is an NAD(+) binding site. H288 is a spermidine binding site. T308–G309 contacts NAD(+). Residues G314–D316 and E323–K329 contribute to the spermidine site. The active-site Nucleophile is the K329. Residue E342 to A343 participates in NAD(+) binding.

This sequence belongs to the deoxyhypusine synthase family. NAD(+) is required as a cofactor.

The enzyme catalyses [eIF5A protein]-L-lysine + spermidine = [eIF5A protein]-deoxyhypusine + propane-1,3-diamine. It participates in protein modification; eIF5A hypusination. Functionally, catalyzes the NAD-dependent oxidative cleavage of spermidine and the subsequent transfer of the butylamine moiety of spermidine to the epsilon-amino group of a critical lysine residue of the eIF-5A precursor protein to form the intermediate deoxyhypusine residue. This is the first step of the post-translational modification of that lysine into an unusual amino acid residue named hypusine. Hypusination is unique to mature eIF-5A factor and is essential for its function. This chain is Probable deoxyhypusine synthase (dhps), found in Dictyostelium discoideum (Social amoeba).